A 121-amino-acid polypeptide reads, in one-letter code: Natriuretic peptides B (121 aa).

Residues M1–S26 form the signal peptide. Residues L61–Q89 are disordered. Residues S77–Q89 are compositionally biased toward polar residues. A disulfide bridge links C99 with C115.

Belongs to the natriuretic peptide family. Post-translationally, the precursor molecule is proteolytically cleaved by the endoprotease Furin to produce brain natriuretic peptide 45. May undergo further proteolytic cleavage by various proteases such as DPP4, MME and possibly FAP, to give rise to a variety of shorter peptides. May be cleaved at Ser-91 by the prolyl endopeptidase FAP (seprase) activity (in vitro). May be degraded by IDE. During IDE degradation, the resulting products initially increase the activation of NPR1 and can also stimulate NPR2 to produce cGMP before the fragments are completely degraded and inactivated by IDE (in vitro). In terms of tissue distribution, expressed abundantly in the ventricle, and in a lesser extent in the atrium (at protein level).

Its subcellular location is the secreted. Functionally, cardiac hormone that plays a key role in mediating cardio-renal homeostasis. May also function as a paracrine antifibrotic factor in the heart. Acts by specifically binding and stimulating NPR1 to produce cGMP, which in turn activates effector proteins that drive various biological responses. Likely involved in regulating the extracellular fluid volume and maintaining the fluid-electrolyte balance through natriuresis, diuresis, kaluresis and chloruresis. The chain is Natriuretic peptides B (Nppb) from Mus musculus (Mouse).